Reading from the N-terminus, the 282-residue chain is MAKKKSILDLMKMKKAEEQVAWVTAYDFPTASFAEQAGMEMILVGDSLGMVVLGYQGTIPVTMEDCISHCQAVRRGAPNTWVIGDMPFGSYQVSDEDAVRNAVRFMKEADVDCIKLEGGDRVKSRIRAITDAGIPVMGHIGLTPQSSGQLGGFKAQGRRVDNARVLIQDALVVQEAGAFSLLVEAVPPEVTKFIADKLDIPVYSIGAGPCDGQLVISGDMLGKFQAFTPKFIKKYANVAEVETNAFKEYVAEVKAGQFPTDDHVYHILDTQEEFEKLFQEFK.

2 residues coordinate Mg(2+): Asp-46 and Asp-85. 3-methyl-2-oxobutanoate is bound by residues 46 to 47 (DS), Asp-85, and Lys-115. Glu-117 contributes to the Mg(2+) binding site. Catalysis depends on Glu-184, which acts as the Proton acceptor.

It belongs to the PanB family. In terms of assembly, homodecamer; pentamer of dimers. It depends on Mg(2+) as a cofactor.

It localises to the cytoplasm. The enzyme catalyses 3-methyl-2-oxobutanoate + (6R)-5,10-methylene-5,6,7,8-tetrahydrofolate + H2O = 2-dehydropantoate + (6S)-5,6,7,8-tetrahydrofolate. It participates in cofactor biosynthesis; (R)-pantothenate biosynthesis; (R)-pantoate from 3-methyl-2-oxobutanoate: step 1/2. Functionally, catalyzes the reversible reaction in which hydroxymethyl group from 5,10-methylenetetrahydrofolate is transferred onto alpha-ketoisovalerate to form ketopantoate. The protein is 3-methyl-2-oxobutanoate hydroxymethyltransferase of Alkaliphilus metalliredigens (strain QYMF).